The sequence spans 112 residues: MASIMYTPKDIFEQEFKSSMRGYDKKEVDEFLDDIIKDYETYISTIEELRQENTRLKEEVKQAKKRQEAAQTTVSPAASVSSSRVATTATNFDILKRISRLEKEVFGKQITE.

The stretch at 32-75 (LDDIIKDYETYISTIEELRQENTRLKEEVKQAKKRQEAAQTTVS) forms a coiled coil.

It belongs to the GpsB family. As to quaternary structure, forms polymers through the coiled coil domains. Interacts with PBP1, MreC and EzrA.

Its subcellular location is the cytoplasm. Functionally, divisome component that associates with the complex late in its assembly, after the Z-ring is formed, and is dependent on DivIC and PBP2B for its recruitment to the divisome. Together with EzrA, is a key component of the system that regulates PBP1 localization during cell cycle progression. Its main role could be the removal of PBP1 from the cell pole after pole maturation is completed. Also contributes to the recruitment of PBP1 to the division complex. Not essential for septum formation. The protein is Cell cycle protein GpsB of Streptococcus mutans serotype c (strain ATCC 700610 / UA159).